We begin with the raw amino-acid sequence, 193 residues long: Thymidine kinase (193 aa).

ATP-binding positions include 9–16 and 87–90; these read STMNAGKS and DEAQ. The active-site Proton acceptor is the Glu-88. Zn(2+) is bound by residues Cys-145, Cys-147, Cys-182, and His-185.

This sequence belongs to the thymidine kinase family. In terms of assembly, homotetramer.

It localises to the cytoplasm. The catalysed reaction is thymidine + ATP = dTMP + ADP + H(+). This chain is Thymidine kinase, found in Haemophilus influenzae (strain ATCC 51907 / DSM 11121 / KW20 / Rd).